The following is a 299-amino-acid chain: UDP-N-acetylenolpyruvoylglucosamine reductase (299 aa).

In terms of domain architecture, FAD-binding PCMH-type spans 19-192 (LGGQALAEVR…AAVTLQLRRS (174 aa)). R169 is an active-site residue. C221 serves as the catalytic Proton donor. The active site involves E292.

This sequence belongs to the MurB family. It depends on FAD as a cofactor.

The protein localises to the cytoplasm. It carries out the reaction UDP-N-acetyl-alpha-D-muramate + NADP(+) = UDP-N-acetyl-3-O-(1-carboxyvinyl)-alpha-D-glucosamine + NADPH + H(+). Its pathway is cell wall biogenesis; peptidoglycan biosynthesis. In terms of biological role, cell wall formation. The polypeptide is UDP-N-acetylenolpyruvoylglucosamine reductase (Oleidesulfovibrio alaskensis (strain ATCC BAA-1058 / DSM 17464 / G20) (Desulfovibrio alaskensis)).